The sequence spans 417 residues: Serine hydroxymethyltransferase (417 aa).

Residues Leu-112 and 116 to 118 (GHL) contribute to the (6S)-5,6,7,8-tetrahydrofolate site. N6-(pyridoxal phosphate)lysine is present on Lys-221. A (6S)-5,6,7,8-tetrahydrofolate-binding site is contributed by Glu-247.

The protein belongs to the SHMT family. Homodimer. Requires pyridoxal 5'-phosphate as cofactor.

The protein resides in the cytoplasm. It carries out the reaction (6R)-5,10-methylene-5,6,7,8-tetrahydrofolate + glycine + H2O = (6S)-5,6,7,8-tetrahydrofolate + L-serine. It participates in one-carbon metabolism; tetrahydrofolate interconversion. The protein operates within amino-acid biosynthesis; glycine biosynthesis; glycine from L-serine: step 1/1. Catalyzes the reversible interconversion of serine and glycine with tetrahydrofolate (THF) serving as the one-carbon carrier. This reaction serves as the major source of one-carbon groups required for the biosynthesis of purines, thymidylate, methionine, and other important biomolecules. Also exhibits THF-independent aldolase activity toward beta-hydroxyamino acids, producing glycine and aldehydes, via a retro-aldol mechanism. This chain is Serine hydroxymethyltransferase, found in Borreliella burgdorferi (strain ATCC 35210 / DSM 4680 / CIP 102532 / B31) (Borrelia burgdorferi).